Reading from the N-terminus, the 363-residue chain is Fructose-bisphosphate aldolase C-B (363 aa).

Residues Arg-56 and Lys-147 each contribute to the substrate site. Glu-188 functions as the Proton acceptor in the catalytic mechanism. Catalysis depends on Lys-230, which acts as the Schiff-base intermediate with dihydroxyacetone-P.

This sequence belongs to the class I fructose-bisphosphate aldolase family. As to quaternary structure, homotetramer.

The enzyme catalyses beta-D-fructose 1,6-bisphosphate = D-glyceraldehyde 3-phosphate + dihydroxyacetone phosphate. Its pathway is carbohydrate degradation; glycolysis; D-glyceraldehyde 3-phosphate and glycerone phosphate from D-glucose: step 4/4. This Danio rerio (Zebrafish) protein is Fructose-bisphosphate aldolase C-B (aldocb).